A 471-amino-acid polypeptide reads, in one-letter code: MSFVVTIPEALAAVATDLAGIGSTIGTANAAAAVPTTTVLAAAADEVSAAMAALFSGHAQAYQALSAQAALFHEQFVRALTAGAGSYAAAEAASAAPLEGVLDVINAPALALLGRPLIGNGANGAPGTGANGGDGGILIGNGGAGGSGAAGMPGGNGGAAGLFGNGGAGGAGGNVASGTAGFGGAGGAGGNGGLLFGAGGAGGVGGLAADAGDGGAGGDGGLFFGVGGAGGAGGTGTNVTGGAGGAGGNGGLLFGAGGVGGVGGDGVAFLGTAPGGPGGAGGAGGLFGVGGAGGAGGIGLVGNGGAGGSGGSALLWGDGGAGGAGGVGSTTGGAGGAGGNAGLLVGAGGAGGAGALGGGATGVGGAGGNGGTAGLLFGAGGAGGAGGFGFGGAGGAGGLGGKAGLIGDGGDGGAGGNGTGAKGGDGGAGGGAILVGNGGNGGNAGSGTPNGSAGTGGAGGLLGKNGMNGLP.

The tract at residues Met1–Ala30 is essential for translocation to the cell surface. The PE domain occupies Met1–Ala93. The tract at residues Gly140–Gly230 is interacts with TLR2.

It belongs to the mycobacterial PE family. PGRS subfamily. As to quaternary structure, interacts with human TLR2.

It is found in the secreted. The protein resides in the cell wall. It localises to the cell surface. Its subcellular location is the cell outer membrane. Functionally, induces TNF-alpha release through human Toll-like receptor 2 (TLR2) signaling pathway, leading to macrophage apoptosis. The polypeptide is PE-PGRS family protein PE_PGRS33 (PE_PGRS33) (Mycobacterium tuberculosis (strain CDC 1551 / Oshkosh)).